Reading from the N-terminus, the 188-residue chain is Elongation factor P (188 aa).

An N6-(3,6-diaminohexanoyl)-5-hydroxylysine modification is found at K34.

This sequence belongs to the elongation factor P family. May be beta-lysylated on the epsilon-amino group of Lys-34 by the combined action of EpmA and EpmB, and then hydroxylated on the C5 position of the same residue by EpmC (if this protein is present). Lysylation is critical for the stimulatory effect of EF-P on peptide-bond formation. The lysylation moiety may extend toward the peptidyltransferase center and stabilize the terminal 3-CCA end of the tRNA. Hydroxylation of the C5 position on Lys-34 may allow additional potential stabilizing hydrogen-bond interactions with the P-tRNA.

It localises to the cytoplasm. It participates in protein biosynthesis; polypeptide chain elongation. In terms of biological role, involved in peptide bond synthesis. Alleviates ribosome stalling that occurs when 3 or more consecutive Pro residues or the sequence PPG is present in a protein, possibly by augmenting the peptidyl transferase activity of the ribosome. Modification of Lys-34 is required for alleviation. The polypeptide is Elongation factor P (Hamiltonella defensa subsp. Acyrthosiphon pisum (strain 5AT)).